The primary structure comprises 140 residues: Large ribosomal subunit protein uL11 (140 aa).

This sequence belongs to the universal ribosomal protein uL11 family. As to quaternary structure, part of the ribosomal stalk of the 50S ribosomal subunit. Interacts with L10 and the large rRNA to form the base of the stalk. L10 forms an elongated spine to which L12 dimers bind in a sequential fashion forming a multimeric L10(L12)X complex. Post-translationally, one or more lysine residues are methylated.

Forms part of the ribosomal stalk which helps the ribosome interact with GTP-bound translation factors. This is Large ribosomal subunit protein uL11 from Karelsulcia muelleri (strain GWSS) (Sulcia muelleri).